Here is a 1336-residue protein sequence, read N- to C-terminus: Putative botulinum-like toxin Wo (1336 aa).

The segment at 1-476 (MDVLEMFDVN…VAGMQRMVSL (476 aa)) is has protease activity. Residue histidine 250 coordinates Zn(2+). Residue glutamate 251 is part of the active site. Positions 254 and 296 each coordinate Zn(2+).

Belongs to the peptidase M27 family. Requires Zn(2+) as cofactor.

It catalyses the reaction Limited hydrolysis of proteins of the neuroexocytosis apparatus, synaptobrevins, SNAP25 or syntaxin. No detected action on small molecule substrates.. With respect to regulation, inhibited by EDTA and 1,10-phenanthroline. When overexpressed the N-terminus (residues 1-476) cleaves rat synaptobrevin-2/VAMP2 between '89-Trp-|-Trp-90' in vitro. This releases the cytoplasmic domain of VAMP2 from the synaptic vesicle membrane, which would prevent the assembly of the trans-SNARE complex on the membrane and thus prevent vesicle-target membrane fusion and neurotransmitter release. This is Putative botulinum-like toxin Wo from Weissella oryzae (strain DSM 25784 / JCM 18191 / LMG 30913 / SG25).